The following is a 328-amino-acid chain: Phosphate acyltransferase (328 aa).

This sequence belongs to the PlsX family. Homodimer. Probably interacts with PlsY.

It is found in the cytoplasm. The catalysed reaction is a fatty acyl-[ACP] + phosphate = an acyl phosphate + holo-[ACP]. It functions in the pathway lipid metabolism; phospholipid metabolism. Its function is as follows. Catalyzes the reversible formation of acyl-phosphate (acyl-PO(4)) from acyl-[acyl-carrier-protein] (acyl-ACP). This enzyme utilizes acyl-ACP as fatty acyl donor, but not acyl-CoA. The sequence is that of Phosphate acyltransferase from Staphylococcus aureus (strain Mu3 / ATCC 700698).